The chain runs to 851 residues: B-box type zinc finger protein ncl-1 (851 aa).

The interval 71–91 (GFGFGSPSSTTSSSPPLSNSP) is disordered. Residues 76-91 (SPSSTTSSSPPLSNSP) show a composition bias toward low complexity. The B box-type 1; atypical zinc-finger motif lies at 127-174 (VPAVHCSGCKSNETATSFCQDCNANLCDNCTMAHKFMHCFADHRVVSL). 4 residues coordinate Zn(2+): Cys132, Cys135, Cys156, and His160. The segment covering 176–197 (TPGTGSSSSSTSSSSSASSTSS) has biased composition (low complexity). The disordered stretch occupies residues 176 to 211 (TPGTGSSSSSTSSSSSASSTSSHQVPSLGGKQSPDS). The B box-type 2 zinc finger occupies 218–261 (KRSVLCLQHRASELVFFCVSCNLAICRDCTVSDHPSGTHQYELI). Residues Cys223, His226, Cys246, and His251 each coordinate Zn(2+). A coiled-coil region spans residues 303–331 (SLHNAHAQLEETVSNLINVIQDQKKTLAK). NHL repeat units follow at residues 573 to 616 (HCKF…FDKE), 620 to 665 (KFQF…YNQY), 666 to 707 (GQFL…FDMF), 708 to 750 (GNIL…FSYE), and 751 to 794 (GQYL…FSQD).

Present in cells in which nucleoli are absent, and absent from large cells in which nucleoli are prominent. Highly expressed in the gonads.

It localises to the cytoplasm. Translational repressor that inhibits protein synthesis. Represses the translation of mRNAs such as fib-1, probably by being recruited by RNA-binding protein nos-2 and the Pumilio proteins puf-5, puf-8 and puf-9 to the consensus core PUF binding motif in the 3'-UTR of fib-1 mRNA. Negatively regulates ribosomal RNA (rRNA) synthesis, ribosomal protein synthesis and nucleolus size. Its role in the negative regulation of nucleolus size is most likely through its negative regulation of the translation of proteins such as the rRNA 2'-O-methyltransferase fib-1, and dao-5. Might act directly as a transcription factor to inhibit RNA polymerase I (rRNA) and III (5S RNA) transcription. Plays a role in embryonic development, and in particular, is involved in regulating the localization of proteins, such as par-2, that are required for embryonic cell polarity. Plays a role in the regulation of lifespan, and the response to nutrient availability. This Caenorhabditis elegans protein is B-box type zinc finger protein ncl-1.